Here is a 315-residue protein sequence, read N- to C-terminus: T cell receptor beta chain MC.7.G5 (315 aa).

The signal sequence occupies residues 1–21; it reads MTIRLLCYMGFYFLGAGLMEA. One can recognise an Ig-like V-type domain in the interval 22–114; it reads DIYQTPRYLV…TSQYLCASSE (93 aa). Positions 22 to 114 are t cell receptor beta variable 25-1; the sequence is DIYQTPRYLV…TSQYLCASSE (93 aa). Cys42 and Cys110 are disulfide-bonded. The segment at 46–50 is CDR1; that stretch reads MGHDK. The interval 68 to 73 is CDR2; sequence SYGVNS. An N-linked (GlcNAc...) asparagine glycan is attached at Asn72. Residues 110–127 form a CDR3 region; sequence CASSEARGLAEFTDTQYF. The t cell receptor beta joining 2-3 stretch occupies residues 122–136; it reads TDTQYFGPGTRLTVL. The interval 138 to 315 is t cell receptor beta constant 2; that stretch reads DLKNVFPPEV…AMVKRKDSRG (178 aa). The region spanning 145–254 is the Ig-like C1-type domain; the sequence is PEVAVFEPSE…WTQDRAKPVT (110 aa). Cys167 and Cys232 are oxidised to a cystine. N-linked (GlcNAc...) asparagine glycosylation is present at Asn206. The interval 267-281 is connecting peptide; it reads CGFTSESYQQGVLSA. The chain crosses the membrane as a helical span at residues 282–304; that stretch reads TILYEILLGKATLYAVLVSALVL. Topologically, residues 305–315 are cytoplasmic; that stretch reads MAMVKRKDSRG.

Disulfide-linked heterodimer with TRAV38-2DV8*01J31*01C*01 alpha chain. The alpha-beta TR associates with the transmembrane signaling CD3 coreceptor proteins to form the TR-CD3 (TCR). The assembly of alpha-beta TR heterodimers with CD3 occurs in the endoplasmic reticulum where a single alpha-beta TR heterodimer associates with one CD3D-CD3E heterodimer, one CD3G-CD3E heterodimer and one CD247 homodimer forming a stable octameric structure. CD3D-CD3E and CD3G-CD3E heterodimers preferentially associate with TR alpha and TR beta chains (via TM domain), respectively. The association of the CD247 homodimer is the last step of TCR assembly in the endoplasmic reticulum and is required for transport to the cell surface. Expressed in MR1-restricted CD8-positive T cells.

It is found in the cell membrane. In terms of biological role, the beta chain of TRAV38-2DV8*01J31*01C*01/TRBV25-1*01J2S3*01C2*01 alpha-beta T cell receptor (TR) clonotype that displays pan-cancer cell recognition via the invariant MR1 molecule. On CD8-positive T cell clone MC.7.G5, likely recognizes tumor-specific or -associated metabolite(s) essential for cancer cell survival, triggering killing of many cancer cell types including lung, melanoma, leukemia, colon, breast, prostate, bone and ovarian cancer cells. Mediates cancer cell cytotoxicity in an HLA-independent manner. Has no reactivity to healthy cells even stressed or infected by bacteria. Antigen recognition initiates TR-CD3 clustering on the cell surface and intracellular activation of LCK that phosphorylates the ITAM motifs of CD3G, CD3D, CD3E and CD247 enabling the recruitment of ZAP70. In turn, ZAP70 phosphorylates LAT, which recruits numerous signaling molecules to form the LAT signalosome. The LAT signalosome propagates signal branching to three major signaling pathways, the calcium, the mitogen-activated protein kinase (MAPK) kinase and the nuclear factor NF-kappa-B (NF-kB) pathways, leading to the mobilization of transcription factors that are critical for gene expression and essential for T cell differentiation into effector/memory T cells. The chain is T cell receptor beta chain MC.7.G5 from Homo sapiens (Human).